Here is a 176-residue protein sequence, read N- to C-terminus: Co-chaperone protein HscB (176 aa).

In terms of domain architecture, J spans 2 to 74 (DYFTLFGLPA…LMRAEYLLSL (73 aa)).

This sequence belongs to the HscB family. As to quaternary structure, interacts with HscA and stimulates its ATPase activity. Interacts with IscU.

Functionally, co-chaperone involved in the maturation of iron-sulfur cluster-containing proteins. Seems to help targeting proteins to be folded toward HscA. The protein is Co-chaperone protein HscB of Escherichia coli O7:K1 (strain IAI39 / ExPEC).